Reading from the N-terminus, the 495-residue chain is Ubiquinone biosynthesis monooxygenase COQ6, mitochondrial (495 aa).

The protein belongs to the UbiH/COQ6 family. As to quaternary structure, component of a multi-subunit COQ enzyme complex. The cofactor is FAD.

The protein localises to the mitochondrion inner membrane. It carries out the reaction a 4-hydroxy-3-(all-trans-polyprenyl)benzoate + 2 reduced [2Fe-2S]-[ferredoxin] + O2 + 2 H(+) = a 3,4-dihydroxy-5-(all-trans-polyprenyl)benzoate + 2 oxidized [2Fe-2S]-[ferredoxin] + H2O. The enzyme catalyses a 2-methoxy-6-(all-trans-polyprenyl)phenol + 2 reduced [2Fe-2S]-[ferredoxin] + O2 + 2 H(+) = a 2-methoxy-6-(all-trans-polyprenyl)benzene-1,4-diol + 2 oxidized [2Fe-2S]-[ferredoxin] + H2O. It functions in the pathway cofactor biosynthesis; ubiquinone biosynthesis. Functionally, FAD-dependent monooxygenase required for two non-consecutive steps during ubiquinone biosynthesis. Required for the C5-ring hydroxylation during ubiquinone biosynthesis by catalyzing the hydroxylation of 4-hydroxy-3-(all-trans-polyprenyl)benzoic acid to 3,4-dihydroxy-5-(all-trans-polyprenyl)benzoic acid. Also acts downstream of coq4, for the C1-hydroxylation during ubiquinone biosynthesis by catalyzing the hydroxylation of 2-methoxy-6-(all-trans-polyprenyl)phenol to 2-methoxy-6-(all-trans-polyprenyl)benzene-1,4-diol. The electrons required for the hydroxylation reaction are funneled indirectly to coq6 from NADPH via a ferredoxin/ferredoxin reductase system. The protein is Ubiquinone biosynthesis monooxygenase COQ6, mitochondrial of Dictyostelium discoideum (Social amoeba).